A 376-amino-acid polypeptide reads, in one-letter code: 26S proteasome non-ATPase regulatory subunit 13 (376 aa).

In terms of domain architecture, PCI spans 171–338; that stretch reads SYYKDALRFL…KRVHMTWVQP (168 aa).

It belongs to the proteasome subunit S11 family. In terms of assembly, component of the 19S proteasome regulatory particle complex. The 26S proteasome consists of a 20S core particle (CP) and two 19S regulatory subunits (RP). The regulatory particle is made of a lid composed of 9 subunits including PSMD13, a base containing 6 ATPases and few additional components.

In terms of biological role, component of the 26S proteasome, a multiprotein complex involved in the ATP-dependent degradation of ubiquitinated proteins. This complex plays a key role in the maintenance of protein homeostasis by removing misfolded or damaged proteins, which could impair cellular functions, and by removing proteins whose functions are no longer required. Therefore, the proteasome participates in numerous cellular processes, including cell cycle progression, apoptosis, or DNA damage repair. The chain is 26S proteasome non-ATPase regulatory subunit 13 (PSMD13) from Bos taurus (Bovine).